Here is a 384-residue protein sequence, read N- to C-terminus: Galactokinase (384 aa).

Glu-35–Asp-38 provides a ligand contact to substrate. ATP contacts are provided by residues Ser-69 and Gly-125 to Ser-131. Residues Ser-131 and Glu-163 each coordinate Mg(2+). The active-site Proton acceptor is Asp-175. Tyr-224 provides a ligand contact to substrate.

The protein belongs to the GHMP kinase family. GalK subfamily.

It localises to the cytoplasm. The enzyme catalyses alpha-D-galactose + ATP = alpha-D-galactose 1-phosphate + ADP + H(+). It functions in the pathway carbohydrate metabolism; galactose metabolism. Functionally, catalyzes the transfer of the gamma-phosphate of ATP to D-galactose to form alpha-D-galactose-1-phosphate (Gal-1-P). The polypeptide is Galactokinase (Aliivibrio fischeri (strain ATCC 700601 / ES114) (Vibrio fischeri)).